The following is a 303-amino-acid chain: UDP-N-acetylenolpyruvoylglucosamine reductase (303 aa).

The FAD-binding PCMH-type domain maps to 29 to 196; sequence KIGGPADVLV…LEAVLQLEQK (168 aa). R174 is a catalytic residue. Catalysis depends on S225, which acts as the Proton donor. Residue E295 is part of the active site.

Belongs to the MurB family. FAD is required as a cofactor.

The protein localises to the cytoplasm. The enzyme catalyses UDP-N-acetyl-alpha-D-muramate + NADP(+) = UDP-N-acetyl-3-O-(1-carboxyvinyl)-alpha-D-glucosamine + NADPH + H(+). Its pathway is cell wall biogenesis; peptidoglycan biosynthesis. Functionally, cell wall formation. This is UDP-N-acetylenolpyruvoylglucosamine reductase from Bacillus licheniformis (strain ATCC 14580 / DSM 13 / JCM 2505 / CCUG 7422 / NBRC 12200 / NCIMB 9375 / NCTC 10341 / NRRL NRS-1264 / Gibson 46).